Here is an 85-residue protein sequence, read N- to C-terminus: uncharacterized protein (85 aa).

An N-terminal signal peptide occupies residues 1–19 (MKTIFTVGAVVLATCLLSG). Cysteine 20 carries N-palmitoyl cysteine lipidation. A lipid anchor (S-diacylglycerol cysteine) is attached at cysteine 20.

The protein localises to the cell outer membrane. This is an uncharacterized protein from Escherichia coli (strain K12).